Here is an 872-residue protein sequence, read N- to C-terminus: Alanine--tRNA ligase (872 aa).

Residues H566, H570, C668, and H672 each contribute to the Zn(2+) site.

The protein belongs to the class-II aminoacyl-tRNA synthetase family. It depends on Zn(2+) as a cofactor.

The protein resides in the cytoplasm. It catalyses the reaction tRNA(Ala) + L-alanine + ATP = L-alanyl-tRNA(Ala) + AMP + diphosphate. In terms of biological role, catalyzes the attachment of alanine to tRNA(Ala) in a two-step reaction: alanine is first activated by ATP to form Ala-AMP and then transferred to the acceptor end of tRNA(Ala). Also edits incorrectly charged Ser-tRNA(Ala) and Gly-tRNA(Ala) via its editing domain. This Lactococcus lactis subsp. cremoris (strain SK11) protein is Alanine--tRNA ligase.